A 1040-amino-acid polypeptide reads, in one-letter code: Vitamin B12-dependent ribonucleotide reductase (1040 aa).

Residues Ser-169, 213-214 (AC), Gly-242, 420-424 (NPCSE), and 604-608 (PTGTI) contribute to the substrate site. A disulfide bond links Cys-214 and Cys-433. Asn-420 (proton acceptor) is an active-site residue. Catalysis depends on Cys-422, which acts as the Cysteine radical intermediate. Catalysis depends on Glu-424, which acts as the Proton acceptor. 2 disordered regions span residues 909–932 (SAEGAAKTGGNGPDLTTAPAGATA) and 969–988 (GSATNGHSNGQSAGGSSDGA). Residues 969–979 (GSATNGHSNGQ) show a composition bias toward polar residues.

It belongs to the ribonucleoside diphosphate reductase class-2 family. The cofactor is adenosylcob(III)alamin.

The catalysed reaction is a 2'-deoxyribonucleoside 5'-diphosphate + [thioredoxin]-disulfide + H2O = a ribonucleoside 5'-diphosphate + [thioredoxin]-dithiol. Its function is as follows. Catalyzes the reduction of ribonucleotides to deoxyribonucleotides. May function to provide a pool of deoxyribonucleotide precursors for DNA repair during oxygen limitation and/or for immediate growth after restoration of oxygen. This chain is Vitamin B12-dependent ribonucleotide reductase (nrdJ), found in Rhodopirellula baltica (strain DSM 10527 / NCIMB 13988 / SH1).